The chain runs to 488 residues: Probable glycine dehydrogenase (decarboxylating) subunit 2 (488 aa).

Position 274 is an N6-(pyridoxal phosphate)lysine (Lys274).

It belongs to the GcvP family. C-terminal subunit subfamily. In terms of assembly, the glycine cleavage system is composed of four proteins: P, T, L and H. In this organism, the P 'protein' is a heterodimer of two subunits. It depends on pyridoxal 5'-phosphate as a cofactor.

The enzyme catalyses N(6)-[(R)-lipoyl]-L-lysyl-[glycine-cleavage complex H protein] + glycine + H(+) = N(6)-[(R)-S(8)-aminomethyldihydrolipoyl]-L-lysyl-[glycine-cleavage complex H protein] + CO2. The glycine cleavage system catalyzes the degradation of glycine. The P protein binds the alpha-amino group of glycine through its pyridoxal phosphate cofactor; CO(2) is released and the remaining methylamine moiety is then transferred to the lipoamide cofactor of the H protein. This is Probable glycine dehydrogenase (decarboxylating) subunit 2 from Listeria monocytogenes serotype 4b (strain F2365).